The chain runs to 286 residues: Bifunctional protein FolD (286 aa).

Residues 164-166, serine 193, and isoleucine 234 contribute to the NADP(+) site; that span reads GRS.

Belongs to the tetrahydrofolate dehydrogenase/cyclohydrolase family. In terms of assembly, homodimer.

The enzyme catalyses (6R)-5,10-methylene-5,6,7,8-tetrahydrofolate + NADP(+) = (6R)-5,10-methenyltetrahydrofolate + NADPH. It carries out the reaction (6R)-5,10-methenyltetrahydrofolate + H2O = (6R)-10-formyltetrahydrofolate + H(+). The protein operates within one-carbon metabolism; tetrahydrofolate interconversion. Functionally, catalyzes the oxidation of 5,10-methylenetetrahydrofolate to 5,10-methenyltetrahydrofolate and then the hydrolysis of 5,10-methenyltetrahydrofolate to 10-formyltetrahydrofolate. This Oleidesulfovibrio alaskensis (strain ATCC BAA-1058 / DSM 17464 / G20) (Desulfovibrio alaskensis) protein is Bifunctional protein FolD.